The primary structure comprises 147 residues: MDLSNLRPAIGSTKNRKRIGRGPGSGNGKTAGKGHKGQNARSGGGVKPGFEGGQMPLQRRLPKRGFKSLNKKVYALVNLRDLQDIFEAGSVVDIEALGQNGLVSRIYDGIKILGDGDLDKALTVKAHKFSQSAIAKIEAAGGKAEVI.

The disordered stretch occupies residues 1-62; the sequence is MDLSNLRPAI…GQMPLQRRLP (62 aa). 2 stretches are compositionally biased toward gly residues: residues 21 to 31 and 42 to 52; these read RGPGSGNGKTA and SGGGVKPGFEG.

Belongs to the universal ribosomal protein uL15 family. As to quaternary structure, part of the 50S ribosomal subunit.

Its function is as follows. Binds to the 23S rRNA. This chain is Large ribosomal subunit protein uL15, found in Syntrophotalea carbinolica (strain DSM 2380 / NBRC 103641 / GraBd1) (Pelobacter carbinolicus).